Consider the following 426-residue polypeptide: 3-phosphoshikimate 1-carboxyvinyltransferase (426 aa).

3-phosphoshikimate contacts are provided by Lys-22, Ser-23, and Arg-27. Residue Lys-22 participates in phosphoenolpyruvate binding. Residues Gly-96 and Arg-124 each contribute to the phosphoenolpyruvate site. Ser-170, Ser-171, Gln-172, Ser-198, Asp-314, Asn-337, and Lys-341 together coordinate 3-phosphoshikimate. Gln-172 contacts phosphoenolpyruvate. The active-site Proton acceptor is the Asp-314. Phosphoenolpyruvate is bound by residues Arg-345, Arg-387, and Lys-412.

It belongs to the EPSP synthase family. As to quaternary structure, monomer.

The protein localises to the cytoplasm. It catalyses the reaction 3-phosphoshikimate + phosphoenolpyruvate = 5-O-(1-carboxyvinyl)-3-phosphoshikimate + phosphate. Its pathway is metabolic intermediate biosynthesis; chorismate biosynthesis; chorismate from D-erythrose 4-phosphate and phosphoenolpyruvate: step 6/7. Catalyzes the transfer of the enolpyruvyl moiety of phosphoenolpyruvate (PEP) to the 5-hydroxyl of shikimate-3-phosphate (S3P) to produce enolpyruvyl shikimate-3-phosphate and inorganic phosphate. In Vibrio campbellii (strain ATCC BAA-1116), this protein is 3-phosphoshikimate 1-carboxyvinyltransferase.